The chain runs to 440 residues: Elongation factor 1-gamma (440 aa).

An N-acetylalanine modification is found at Ala2. The GST N-terminal domain occupies 2 to 87 (AAGTLYTYPE…YVSNEELRGS (86 aa)). Residues 88 to 216 (TPEAAAQVVQ…VKLCEKMAQF (129 aa)) form the GST C-terminal domain. N6-acetyllysine is present on residues Lys147 and Lys212. Basic and acidic residues predominate over residues 221–257 (FAESQPKKDTPRKEKGSREEKLKPQAERKEGKEEKKA). The disordered stretch occupies residues 221–267 (FAESQPKKDTPRKEKGSREEKLKPQAERKEGKEEKKAAAPAPEEELD). Lys256 participates in a covalent cross-link: Glycyl lysine isopeptide (Lys-Gly) (interchain with G-Cter in SUMO1). Residues 279–440 (AKDPFAHLPK…KAFNQGKIFK (162 aa)) form the EF-1-gamma C-terminal domain. A Glycyl lysine isopeptide (Lys-Gly) (interchain with G-Cter in SUMO2) cross-link involves residue Lys288. Residue Lys404 is modified to N6-acetyllysine. The residue at position 437 (Lys437) is an N6-acetyllysine; alternate. An N6-malonyllysine; alternate modification is found at Lys437.

In terms of assembly, EF-1 is composed of four subunits: alpha, beta, delta, and gamma.

Functionally, probably plays a role in anchoring the complex to other cellular components. The sequence is that of Elongation factor 1-gamma (EEF1G) from Bos taurus (Bovine).